The sequence spans 461 residues: CASP-like protein 4U1 (461 aa).

The segment at 1-239 is disordered; the sequence is MASTPRTPAP…RAAETKLPLS (239 aa). The Cytoplasmic segment spans residues 1–314; sequence MASTPRTPAP…AAVAVGERRE (314 aa). Over residues 7–69 the composition is skewed to pro residues; that stretch reads TPAPVRSPPP…PLETPPPPSP (63 aa). 2 stretches are compositionally biased toward low complexity: residues 116–126 and 135–155; these read LSPMRLAAPRL and TPTG…AAAG. The segment covering 193–204 has biased composition (pro residues); the sequence is SPSPSPTPPSPL. The span at 205–221 shows a compositional bias: low complexity; sequence TPAAAPVVNNNSNNKNN. A helical transmembrane segment spans residues 315-335; the sequence is LSVTLRLATAVLSLAAFSVIA. The Extracellular segment spans residues 336–354; that stretch reads SARTSGWAGDYYAHHLQYR. Residues 355–375 form a helical membrane-spanning segment; it reads YAVAVNVIVCAYSIAQSFGEI. Topologically, residues 376–392 are cytoplasmic; that stretch reads RRLISPRFIFRSMSSYY. Residues 393-413 form a helical membrane-spanning segment; the sequence is CSLFLDQALAYLLMSASSAAA. The Extracellular segment spans residues 414–431; the sequence is SRNDLWVSRFGTDAFNRK. The chain crosses the membrane as a helical span at residues 432-452; the sequence is ITSALWLSFIAFLMLALNALI. Residues 453 to 461 lie on the Cytoplasmic side of the membrane; it reads STANLFSML.

Belongs to the Casparian strip membrane proteins (CASP) family. As to quaternary structure, homodimer and heterodimers.

It localises to the cell membrane. The polypeptide is CASP-like protein 4U1 (Sorghum bicolor (Sorghum)).